A 407-amino-acid polypeptide reads, in one-letter code: O-methyltransferase verK (407 aa).

Residues E263 and 295–297 each bind S-adenosyl-L-methionine; that span reads GDF. Catalysis depends on H314, which acts as the Proton acceptor.

Belongs to the class I-like SAM-binding methyltransferase superfamily. Cation-independent O-methyltransferase family.

It participates in mycotoxin biosynthesis. In terms of biological role, O-methyltransferase; part of the gene cluster that mediates the biosynthesis of 11'-deoxyverticillin A, one of the dimeric epipolythiodioxopiperazines (ETPs) from the verticillin family that act as mycotoxins. 11'-deoxyverticillin A is required for normal conidiation. The nonribosomal peptide synthetase verP is speculated to be responsible for condensation of amino acids to form the carbon skeleton of verticillin, whereas the cluster-specific tailoring enzymes are involved in further modifications leading to the production of 11'-deoxyverticillin A. The chain is O-methyltransferase verK from Clonostachys rogersoniana.